The primary structure comprises 354 residues: Holliday junction branch migration complex subunit RuvB (354 aa).

The tract at residues 1–183 (MTGDNLVSAY…FGFVAHLDFY (183 aa)) is large ATPase domain (RuvB-L). ATP is bound by residues R23, G64, K67, T68, S69, 130-132 (EDF), R173, Y183, and R220. T68 provides a ligand contact to Mg(2+). Residues 184–254 (SPADLETLLH…AARAALLVYD (71 aa)) form a small ATPAse domain (RuvB-S) region. A head domain (RuvB-H) region spans residues 257–354 (ALGLDRLDRQ…DLFSVEPDQP (98 aa)). DNA contacts are provided by R312 and R317. Residues 330–354 (TPPNGIFGSDAPPASDLFSVEPDQP) form a disordered region.

This sequence belongs to the RuvB family. As to quaternary structure, homohexamer. Forms an RuvA(8)-RuvB(12)-Holliday junction (HJ) complex. HJ DNA is sandwiched between 2 RuvA tetramers; dsDNA enters through RuvA and exits via RuvB. An RuvB hexamer assembles on each DNA strand where it exits the tetramer. Each RuvB hexamer is contacted by two RuvA subunits (via domain III) on 2 adjacent RuvB subunits; this complex drives branch migration. In the full resolvosome a probable DNA-RuvA(4)-RuvB(12)-RuvC(2) complex forms which resolves the HJ.

It is found in the cytoplasm. It catalyses the reaction ATP + H2O = ADP + phosphate + H(+). In terms of biological role, the RuvA-RuvB-RuvC complex processes Holliday junction (HJ) DNA during genetic recombination and DNA repair, while the RuvA-RuvB complex plays an important role in the rescue of blocked DNA replication forks via replication fork reversal (RFR). RuvA specifically binds to HJ cruciform DNA, conferring on it an open structure. The RuvB hexamer acts as an ATP-dependent pump, pulling dsDNA into and through the RuvAB complex. RuvB forms 2 homohexamers on either side of HJ DNA bound by 1 or 2 RuvA tetramers; 4 subunits per hexamer contact DNA at a time. Coordinated motions by a converter formed by DNA-disengaged RuvB subunits stimulates ATP hydrolysis and nucleotide exchange. Immobilization of the converter enables RuvB to convert the ATP-contained energy into a lever motion, pulling 2 nucleotides of DNA out of the RuvA tetramer per ATP hydrolyzed, thus driving DNA branch migration. The RuvB motors rotate together with the DNA substrate, which together with the progressing nucleotide cycle form the mechanistic basis for DNA recombination by continuous HJ branch migration. Branch migration allows RuvC to scan DNA until it finds its consensus sequence, where it cleaves and resolves cruciform DNA. This chain is Holliday junction branch migration complex subunit RuvB, found in Salinispora arenicola (strain CNS-205).